The sequence spans 177 residues: ATP-dependent protease subunit HslV (177 aa).

Thr-4 is a catalytic residue. Na(+) is bound by residues Ser-159, Cys-162, and Thr-165.

Belongs to the peptidase T1B family. HslV subfamily. In terms of assembly, a double ring-shaped homohexamer of HslV is capped on each side by a ring-shaped HslU homohexamer. The assembly of the HslU/HslV complex is dependent on binding of ATP.

It localises to the cytoplasm. It carries out the reaction ATP-dependent cleavage of peptide bonds with broad specificity.. With respect to regulation, allosterically activated by HslU binding. In terms of biological role, protease subunit of a proteasome-like degradation complex believed to be a general protein degrading machinery. This chain is ATP-dependent protease subunit HslV, found in Mesorhizobium japonicum (strain LMG 29417 / CECT 9101 / MAFF 303099) (Mesorhizobium loti (strain MAFF 303099)).